We begin with the raw amino-acid sequence, 593 residues long: Chromodomain Y-like protein (593 aa).

Over residues 1–14 the composition is skewed to polar residues; sequence MGIGNSQPNSQEAQ. The disordered stretch occupies residues 1–30; it reads MGIGNSQPNSQEAQLCTLPEKAEQPTDDNT. Residues 56 to 116 enclose the Chromo domain; sequence TQVESIVDKR…RHNERQKEGS (61 aa). The segment at 56 to 304 is interaction with EZH2; that stretch reads TQVESIVDKR…TIQTSVTGVT (249 aa). Serine 83 is subject to Phosphoserine. A disordered region spans residues 110-158; it reads ERQKEGSLARASRASPSNARKQISRSTHSTLSKTNSKALVVGKDHESKS. A compositionally biased stretch (low complexity) spans 117–129; sequence LARASRASPSNAR. Lysine 130 is modified (N6,N6,N6-trimethyllysine; by EHMT2; alternate). An N6,N6-dimethyllysine; by EHMT2; alternate modification is found at lysine 130. Lysine 130 is modified (N6-methyllysine; by EHMT2; alternate). The segment covering 133–146 has biased composition (polar residues); the sequence is SRSTHSTLSKTNSK. Residues serine 165, serine 196, and serine 211 each carry the phosphoserine modification. The tract at residues 200-223 is disordered; that stretch reads GRTSVDGFQGESPEKLDPVDQGAE. The acetyl-CoA-binding domain stretch occupies residues 357–589; sequence SENNSLNPEV…DSMLKYLQRK (233 aa).

In terms of assembly, forms multimers and multimerization is required for stable binding to chromatin. Interacts with HDAC1 and HDAC2 via its C-terminal acetyl-CoA-binding domain. Interacts with EZH2, EED, SUZ12, REST, EHMT1 and EHMT2. Part of a complex containing at least CDYL, REST, WIZ, SETB1, EHMT1 and EHMT2. Part of a complex containing at least CDYL, MIER1, MIER2, HDAC1 and HDAC2. Interacts with CHAF1A and CHAF1B; bridging the CAF-1 complex to the MCM2-7 (MCM) complex. Interacts with MCM3 and MCM5; bridging the CAF-1 complex to the MCM2-7 (MCM) complex. Interacts with EHMT2 and PRDM9; interaction only takes place when PRDM9 is bound to hotspot DNA. As to expression, highly expressed in testis (at protein level). Expressed in the hippocampus (at protein level). Expressed in the medial prefrontal cortex, prelimbic cortex, intralimbic cortex and cingulate cortex area (at protein level). Isoform 1: Expressed as 2 transcripts encoding the same protein, a ubiquitous transcript and a highly expressed testis-specific transcript.

It is found in the nucleus. Its subcellular location is the chromosome. It carries out the reaction L-lysyl-[protein] + acetyl-CoA = N(6)-acetyl-L-lysyl-[protein] + CoA + H(+). The enzyme catalyses 3-hydroxybutanoyl-CoA = (2E)-butenoyl-CoA + H2O. Chromatin reader protein that recognizes and binds histone H3 trimethylated at 'Lys-9', dimethylated at 'Lys-27' and trimethylated at 'Lys-27' (H3K9me3, H3K27me2 and H3K27me3, respectively). Part of multimeric repressive chromatin complexes, where it is required for transmission and restoration of repressive histone marks, thereby preserving the epigenetic landscape. Required for chromatin targeting and maximal enzymatic activity of Polycomb repressive complex 2 (PRC2); acts as a positive regulator of PRC2 activity by bridging the pre-existing histone H3K27me3 and newly recruited PRC2 on neighboring nucleosomes. Acts as a corepressor for REST by facilitating histone-lysine N-methyltransferase EHMT2 recruitment and H3K9 dimethylation at REST target genes for repression. Involved in X chromosome inactivation in females: recruited to Xist RNA-coated X chromosome and facilitates propagation of H3K9me2 by anchoring EHMT2. Promotes EZH2 accumulation and H3K27me3 methylation at DNA double strand breaks (DSBs), thereby facilitating transcriptional repression at sites of DNA damage and homology-directed repair of DSBs. Required for neuronal migration during brain development by repressing expression of RHOA. By repressing the expression of SCN8A, contributes to the inhibition of intrinsic neuronal excitability and epileptogenesis. In addition to acting as a chromatin reader, acts as a hydro-lyase. Shows crotonyl-coA hydratase activity by mediating the conversion of crotonyl-CoA ((2E)-butenoyl-CoA) to beta-hydroxybutyryl-CoA (3-hydroxybutanoyl-CoA), thereby acting as a negative regulator of histone crotonylation. Histone crotonylation is required during spermatogenesis; down-regulation of histone crotonylation by CDYL regulates the reactivation of sex chromosome-linked genes in round spermatids and histone replacement in elongating spermatids. By regulating histone crotonylation and trimethylation of H3K27, may be involved in stress-induced depression-like behaviors, possibly by regulating VGF expression. May have histone acetyltransferase activity; such activity is however unsure in vivo. Functionally, not able to recognize and bind histone H3K9me3, histone H3K27me2 and histone H3K27me3, due to the presence of a N-terminal extension that inactivates the chromo domain. This is Chromodomain Y-like protein from Mus musculus (Mouse).